We begin with the raw amino-acid sequence, 357 residues long: Protein pelota homolog (357 aa).

This sequence belongs to the eukaryotic release factor 1 family. Pelota subfamily. Monomer. It depends on a divalent metal cation as a cofactor.

It is found in the cytoplasm. Its function is as follows. May function in recognizing stalled ribosomes, interact with stem-loop structures in stalled mRNA molecules, and effect endonucleolytic cleavage of the mRNA. May play a role in the release non-functional ribosomes and degradation of damaged mRNAs. Has endoribonuclease activity. This is Protein pelota homolog from Halobacterium salinarum (strain ATCC 29341 / DSM 671 / R1).